Here is a 436-residue protein sequence, read N- to C-terminus: Coiled-coil domain-containing protein 71 (436 aa).

The disordered stretch occupies residues alanine 95–valine 119. The span at threonine 105–leucine 116 shows a compositional bias: polar residues. At serine 129 the chain carries Phosphoserine. Disordered stretches follow at residues leucine 210 to arginine 258 and alanine 314 to arginine 405. A coiled-coil region spans residues lysine 264–lysine 334. Residues lysine 329–lysine 340 are compositionally biased toward basic residues. Residues glutamine 344 to valine 359 are compositionally biased toward polar residues. The span at proline 373–alanine 386 shows a compositional bias: basic residues.

This is Coiled-coil domain-containing protein 71 (Ccdc71) from Rattus norvegicus (Rat).